A 119-amino-acid polypeptide reads, in one-letter code: MKIALIAHDKKKEEMIELAKDFEDKLSKHILVATGTTGLKVMQNTSLDVKRCKSGPLGGDQEIGAMVANHDVDMVIFLRDPLTAQPHEPDISALLRLCDVYKVPLATNTESAKLIMADI.

One can recognise an MGS-like domain in the interval 1-119 (MKIALIAHDK…ESAKLIMADI (119 aa)). Substrate contacts are provided by residues histidine 8, lysine 12, 34-37 (TGTT), and 54-55 (SG). Aspartate 60 functions as the Proton donor/acceptor in the catalytic mechanism. Residue histidine 87 coordinates substrate.

It belongs to the methylglyoxal synthase family.

It carries out the reaction dihydroxyacetone phosphate = methylglyoxal + phosphate. Catalyzes the formation of methylglyoxal from dihydroxyacetone phosphate. The polypeptide is Methylglyoxal synthase (Clostridium perfringens (strain ATCC 13124 / DSM 756 / JCM 1290 / NCIMB 6125 / NCTC 8237 / Type A)).